Consider the following 118-residue polypeptide: MSTLNQAHCEACRADAPQVSEAELPELLKQIPDWNIEVRDGVMQLEKVFLFKNFKFALAFTNAVGEIAEAEGHHPGLLTEWGKVTVTWWSHSIKGLHRNDFIMAARTDGVASGAEGRK.

The protein belongs to the pterin-4-alpha-carbinolamine dehydratase family.

The enzyme catalyses (4aS,6R)-4a-hydroxy-L-erythro-5,6,7,8-tetrahydrobiopterin = (6R)-L-erythro-6,7-dihydrobiopterin + H2O. In Pseudomonas savastanoi pv. phaseolicola (strain 1448A / Race 6) (Pseudomonas syringae pv. phaseolicola (strain 1448A / Race 6)), this protein is Putative pterin-4-alpha-carbinolamine dehydratase.